We begin with the raw amino-acid sequence, 341 residues long: MENLQLVLFVLGAIAIVAVLVHGFWSIRKQQPKSLKESPMTGFYKDQGATRDHQGFDADGIGQVRVRKGSPISDDERAEDEIDFAPKEPTLTSEGQMDSSVRQDENVAEAGDDFSLSDQPKQRVTRQRQEPVLSAEVQQEEINQMELGLGQEAAPNQSSLFESTVPELSPEPEPSIEVPEPVSEPVLESVPEPEPVAPEPEVLPEPQDVLVLHVVAAEGEELNGAELLPSLLSLNFKFGDMSIFHRHEDNAGTGKTLFSLANMVKPGVFNLDDMEQFTTEGVVLFMTLPCHGDPLRNFSIMLNSAHQLADDLSGQLLDGGRVAWCENTKQNYLQRIRTQNS.

The Periplasmic segment spans residues 1–6 (MENLQL). The helical transmembrane segment at 7–27 (VLFVLGAIAIVAVLVHGFWSI) threads the bilayer. Residues 28–341 (RKQQPKSLKE…YLQRIRTQNS (314 aa)) are Cytoplasmic-facing. 2 disordered regions span residues 35–134 (LKES…PVLS) and 157–201 (QSSL…PEPE). Residues 90–100 (TLTSEGQMDSS) show a composition bias toward polar residues. The span at 175 to 190 (SIEVPEPVSEPVLESV) shows a compositional bias: low complexity. The segment covering 192–201 (EPEPVAPEPE) has biased composition (pro residues).

Belongs to the ZipA family. In terms of assembly, interacts with FtsZ via their C-terminal domains.

The protein localises to the cell inner membrane. Functionally, essential cell division protein that stabilizes the FtsZ protofilaments by cross-linking them and that serves as a cytoplasmic membrane anchor for the Z ring. Also required for the recruitment to the septal ring of downstream cell division proteins. This chain is Cell division protein ZipA, found in Shewanella sediminis (strain HAW-EB3).